The chain runs to 591 residues: L-fucose isomerase (591 aa).

Residues Glu-337 and Asp-361 each act as proton acceptor in the active site. The Mn(2+) site is built by Glu-337, Asp-361, and His-528.

It belongs to the L-fucose isomerase family. As to quaternary structure, homohexamer. It depends on Mn(2+) as a cofactor.

The protein resides in the cytoplasm. The enzyme catalyses L-fucose = L-fuculose. The protein operates within carbohydrate degradation; L-fucose degradation; L-lactaldehyde and glycerone phosphate from L-fucose: step 1/3. Converts the aldose L-fucose into the corresponding ketose L-fuculose. The chain is L-fucose isomerase from Escherichia coli (strain ATCC 8739 / DSM 1576 / NBRC 3972 / NCIMB 8545 / WDCM 00012 / Crooks).